The primary structure comprises 192 residues: NADH dehydrogenase [ubiquinone] iron-sulfur protein 3 (192 aa).

The protein belongs to the complex I 30 kDa subunit family. Complex I is composed of about 45 different subunits. This is a component of the iron-sulfur (IP) fragment of the enzyme.

It is found in the mitochondrion inner membrane. The enzyme catalyses a ubiquinone + NADH + 5 H(+)(in) = a ubiquinol + NAD(+) + 4 H(+)(out). Functionally, core subunit of the mitochondrial membrane respiratory chain NADH dehydrogenase (Complex I) that is believed to belong to the minimal assembly required for catalysis. Complex I functions in the transfer of electrons from NADH to the respiratory chain. The immediate electron acceptor for the enzyme is believed to be ubiquinone. In Beta vulgaris (Sugar beet), this protein is NADH dehydrogenase [ubiquinone] iron-sulfur protein 3 (NAD9).